We begin with the raw amino-acid sequence, 498 residues long: COP9 signalosome complex subunit 1 (498 aa).

The 182-residue stretch at 249–430 (SYLEAANSFI…HVLVSTQGDK (182 aa)) folds into the PCI domain.

The protein belongs to the CSN1 family. In terms of assembly, component of the COP9 signalosome (CSN) complex.

It is found in the cytoplasm. Its subcellular location is the nucleus. Its function is as follows. Component of the COP9 signalosome (CSN) complex that acts as an regulator of the ubiquitin (Ubl) conjugation pathway by mediating the deneddylation of the cullin subunit of SCF-type E3 ubiquitin-protein ligase complexes. The CSN complex seems to link protein degradation to sexual development. Required for fruit body formation. The protein is COP9 signalosome complex subunit 1 (csnA) of Emericella nidulans (strain FGSC A4 / ATCC 38163 / CBS 112.46 / NRRL 194 / M139) (Aspergillus nidulans).